The primary structure comprises 317 residues: Neuroguidin-A (317 aa).

Disordered regions lie at residues E125–K170 and S280–H317. The span at D146–A157 shows a compositional bias: acidic residues. The span at K297–H317 shows a compositional bias: basic residues.

It belongs to the SAS10 family. As to quaternary structure, part of the small subunit (SSU) processome, composed of more than 70 proteins and the RNA chaperone small nucleolar RNA (snoRNA) U3.

Its subcellular location is the nucleus. The protein resides in the nucleolus. It is found in the chromosome. The protein localises to the centromere. It localises to the cytoplasm. Its subcellular location is the cell projection. The protein resides in the axon. It is found in the dendrite. The protein localises to the filopodium. In terms of biological role, part of the small subunit (SSU) processome, first precursor of the small eukaryotic ribosomal subunit. During the assembly of the SSU processome in the nucleolus, many ribosome biogenesis factors, an RNA chaperone and ribosomal proteins associate with the nascent pre-rRNA and work in concert to generate RNA folding, modifications, rearrangements and cleavage as well as targeted degradation of pre-ribosomal RNA by the RNA exosome. Its dissociation from the complex determines the transition from state pre-A1 to state pre-A1*. May inhibit mRNA translation. The protein is Neuroguidin-A (ngdn-a) of Xenopus laevis (African clawed frog).